We begin with the raw amino-acid sequence, 458 residues long: Protein RICE SALT SENSITIVE 3 (458 aa).

Residues 1-17 (MVGSGAAGGGGGGGGGG) show a composition bias toward gly residues. 4 disordered regions span residues 1 to 21 (MVGS…DHAR), 220 to 325 (TSPS…PEGD), 354 to 374 (GGGA…GHGG), and 386 to 458 (SHSN…TFLE). A compositionally biased stretch (low complexity) spans 220-232 (TSPSPSSFPLKQQ). Positions 245–262 (HAPPQLPPGASPLFPPGP) are enriched in pro residues. Over residues 308–317 (QQPMAAPQQH) the composition is skewed to low complexity. Residues 413-436 (SSSTTSTSPSVSASTAPAPPQQQQ) are compositionally biased toward low complexity.

As to quaternary structure, interacts with BHLH094, BHLH089, TIFY11A/JAZ9 and TIFY11C/JAZ11. Forms a ternary complex with TIFY11A/JAZ9 and BHLH094 in the nucleus. In terms of tissue distribution, expressed in root tips. Expressed at high levels in the meristematic zone and at low levels in the elongation zone of the root tip.

Its subcellular location is the nucleus. It is found in the cytoplasm. In terms of biological role, involved in the repression of jasmonate (JA)-induced genes. Forms a ternary complex with TIFY11A/JAZ9 and BHLH094 to negatively regulate JA-responsive genes. Involved in transcriptional regulation in the root tip. Plays a regulatory role in root cell elongation. Regulates root cell elongation during salt stress. This chain is Protein RICE SALT SENSITIVE 3, found in Oryza sativa subsp. japonica (Rice).